The primary structure comprises 358 residues: G-protein coupled receptor 87 (358 aa).

The Extracellular portion of the chain corresponds to 1-47; that stretch reads MGLNLTLTKLPGNELYSQASHTANSTSEGHGKNSTLHNKFDTIILPV. N-linked (GlcNAc...) asparagine glycosylation is found at Asn4, Asn24, and Asn33. A helical transmembrane segment spans residues 48-68; that stretch reads LYLVIFVASILLNGLAVWIFF. Residues 69–75 are Cytoplasmic-facing; it reads HIRNKTS. The helical transmembrane segment at 76 to 96 threads the bilayer; the sequence is FIFYLKNIVVADLIMTLTFPF. Over 97 to 116 the chain is Extracellular; that stretch reads RIVRDAGFGPWYFEFILCRY. A disulfide bridge links Cys114 with Cys192. The chain crosses the membrane as a helical span at residues 117-137; it reads TSVLFYANMYTSIVFLGLISV. The Cytoplasmic portion of the chain corresponds to 138–159; that stretch reads DRYLKVVKPFGDSRMYSITFTK. A helical membrane pass occupies residues 160-180; the sequence is VLSVCVWVIMAILSLPNIILT. At 181–208 the chain is on the extracellular side; sequence NGQPTKENIHDCMKLKSPLGAKWHMAVT. Residues 209–229 form a helical membrane-spanning segment; that stretch reads YVDSCLFVAVLVILIGCYIAI. The Cytoplasmic portion of the chain corresponds to 230–256; that stretch reads SRYIHKSSRQFISQSSRKRKHNQSIRV. The helical transmembrane segment at 257–277 threads the bilayer; the sequence is VVAVFFTCFLPYHLCRIPFTF. The Extracellular portion of the chain corresponds to 278-297; that stretch reads SNLDRLLDESAHKILYYCKE. Residues 298 to 318 traverse the membrane as a helical segment; sequence MTLFLSACNVCLDPIIYFFMC. The Cytoplasmic segment spans residues 319–358; the sequence is KSFSRRLFKKSNIRTRSESIRSLQSVRRSEVRIYYDYTDV.

Belongs to the G-protein coupled receptor 1 family. As to expression, expressed at high levels in testis and brain and to a lesser extent placenta, ovary, prostate, and skeletal muscle but not in heart, lung, kidney, liver or intestine.

It is found in the cell membrane. Functionally, receptor for lysophosphatidic acid (LPA). Necessary for p53/TP53-dependent survival in response to DNA damage. Promotes the Hippo-YAP signaling pathway and thereby modulates glycolysis and oxidative stress production by the regulation of hexokinase-2/HK2. The chain is G-protein coupled receptor 87 (Gpr87) from Mus musculus (Mouse).